A 340-amino-acid chain; its full sequence is MEQTLVIQKKKGFGFSQGIGITLLIAIAAKYLAELPFLNIMGQLVIAILIGMVWRAAIGVPHDAIAGTNFASKKLLRFGIILLGMRLNLVDIAKAGPKVLVIAAVVITFTIFVVYGLTKVFKVEKKLGILTACGTAICGAAAVVAIAPQVKAKDDETAVGAAIIAILGTIFTLIYTLLYPVLGLSPYGYGVFSGATLHEIAHVIAAAAPGGSTAVDIAVIVKLTRVAMLVPVAILIGLWFGKSEGSEGKRSWRELPIPWFIFGFLAMSAVHSLGIIPEVVAGYIVVLAYMLIAMAMAGLGLNVEFKTFRKLGSKAFVAGLIGSVCLSVLGYVLVYALGFM.

A run of 10 helical transmembrane segments spans residues 13 to 35, 40 to 59, 99 to 118, 128 to 150, 157 to 179, 189 to 211, 218 to 240, 255 to 277, 279 to 301, and 316 to 338; these read FGFSQGIGITLLIAIAAKYLAEL, IMGQLVIAILIGMVWRAAIG, VLVIAAVVITFTIFVVYGLT, GILTACGTAICGAAAVVAIAPQV, TAVGAAIIAILGTIFTLIYTLLY, YGVFSGATLHEIAHVIAAAAPGG, AVIVKLTRVAMLVPVAILIGLWF, LPIPWFIFGFLAMSAVHSLGIIP, VVAGYIVVLAYMLIAMAMAGLGL, and FVAGLIGSVCLSVLGYVLVYALG.

Belongs to the UPF0324 family.

The protein resides in the cell membrane. This chain is UPF0324 membrane protein BC_5174, found in Bacillus cereus (strain ATCC 14579 / DSM 31 / CCUG 7414 / JCM 2152 / NBRC 15305 / NCIMB 9373 / NCTC 2599 / NRRL B-3711).